The following is a 310-amino-acid chain: Lipoyl synthase (310 aa).

[4Fe-4S] cluster-binding residues include cysteine 54, cysteine 59, cysteine 65, cysteine 80, cysteine 84, cysteine 87, and serine 295. The Radical SAM core domain maps to 66–284 (FASGTATFLI…LFGEDNLGFM (219 aa)).

Belongs to the radical SAM superfamily. Lipoyl synthase family. Requires [4Fe-4S] cluster as cofactor.

It is found in the cytoplasm. It carries out the reaction [[Fe-S] cluster scaffold protein carrying a second [4Fe-4S](2+) cluster] + N(6)-octanoyl-L-lysyl-[protein] + 2 oxidized [2Fe-2S]-[ferredoxin] + 2 S-adenosyl-L-methionine + 4 H(+) = [[Fe-S] cluster scaffold protein] + N(6)-[(R)-dihydrolipoyl]-L-lysyl-[protein] + 4 Fe(3+) + 2 hydrogen sulfide + 2 5'-deoxyadenosine + 2 L-methionine + 2 reduced [2Fe-2S]-[ferredoxin]. Its pathway is protein modification; protein lipoylation via endogenous pathway; protein N(6)-(lipoyl)lysine from octanoyl-[acyl-carrier-protein]: step 2/2. Its function is as follows. Catalyzes the radical-mediated insertion of two sulfur atoms into the C-6 and C-8 positions of the octanoyl moiety bound to the lipoyl domains of lipoate-dependent enzymes, thereby converting the octanoylated domains into lipoylated derivatives. The sequence is that of Lipoyl synthase from Prochlorococcus marinus (strain MIT 9215).